Consider the following 849-residue polypeptide: MRVKGIQRNWQHLWKWGTLILGLVIICSASDNLWVTVYYGVPVWEDADTPLFCASDAKSYSSEKHNVWATHACVPTDPNPQEIAIENVTENFNMWKNNMVEQMQEDIISLWEESLKPCVKLTPLCITLNCTNVNSANHTEANNTVENKEEIKNCSFKITTERGGKKKEEYALFYKLDVVPISNGNKTSYRLIHCNVSTIKQACPKVNFDPIPIHYCAPAGFAILKCRDKEYNGTGPCKNVSTVQCTHGIKPVVSTQLLLNGSLAEEDIRIRSENFTDNTKVIIVQLNNSIEINCIRPNNNTRKSIPIGPGQAFYATGDIIGDIRQAHCNVSRIKWREMLKNVTAQLRKIYNNKNITFNSSAGGDLEITTHSFNCRGEFFYCNTSGLFNNNISNINNETITLPCKIKQIVRMWQKVGQAMYALPIAGNLVCKSNITGLILTRDGGNNNDSTEETFRPGGGDMRDNWRSELYKYKTVKIKSLGVAPTRARRRVVEREKRAVGLGAVFLGFLGAAGSTMGAASITLTAQVRQLLSGIVQQQSNLLRAIEAQQHLLQLTVWGIKQLQSRVLAIERYLKDQQLLGIWGCSGKLICTTNVPWNTSWSNKSYNEIWDNMTWLEWEREIHNYTQHIYSLIEESQNQQEKNEQDLLALDKWASLWNWFDISNWLWYIRIFIMIVGGLIGLRIVFAVLSIVNRVRQGYSPLSFQTLTHHQREPDRLGKTEEGGGEQDRDRSTRLVSGFLALAWDDLRSLCLFSYHRLRDLVLIAARTVELLGRSSLKGLRLGWEGLKYLWNLLLYWGRELKNSAINLLDTIAIATANGTDRVIEVAQRAYRAILNVPTRIRQGLERALL.

A signal peptide spans 1–31 (MRVKGIQRNWQHLWKWGTLILGLVIICSASD). The Extracellular segment spans residues 32-670 (NLWVTVYYGV…ISNWLWYIRI (639 aa)). C53 and C73 form a disulfide bridge. N-linked (GlcNAc...) asparagine; by host glycans are attached at residues N87, N129, N137, N142, N153, N185, N195, N232, N239, N260, N274, N287, N299, N329, N341, N354, and N358. Disulfide bonds link C118/C203, C125/C194, C130/C154, C216/C245, and C226/C237. Residues 130–153 (CTNVNSANHTEANNTVENKEEIKN) form a V1 region. The interval 154–194 (CSFKITTERGGKKKEEYALFYKLDVVPISNGNKTSYRLIHC) is V2. The segment at 294–327 (CIRPNNNTRKSIPIGPGQAFYATGDIIGDIRQAH) is V3. A disulfide bridge connects residues C294 and C328. The tract at residues 360 to 370 (SAGGDLEITTH) is CD4-binding loop. Intrachain disulfides connect C374–C430 and C381–C403. Positions 381–403 (CNTSGLFNNNISNINNETITLPC) are V4. 5 N-linked (GlcNAc...) asparagine; by host glycosylation sites follow: N382, N390, N396, N433, and N447. 2 V5 regions span residues 446-457 (NNDSTEETFRPG) and 448-457 (DSTEETFRPG). Positions 498-518 (AVGLGAVFLGFLGAAGSTMGA) are fusion peptide. An immunosuppression region spans residues 560-578 (KQLQSRVLAIERYLKDQQL). A disulfide bridge links C584 with C590. Residues N597, N602, N611, and N623 are each glycosylated (N-linked (GlcNAc...) asparagine; by host). Residues 619–653 (REIHNYTQHIYSLIEESQNQQEKNEQDLLALDKWA) adopt a coiled-coil conformation. Residues 648–669 (ALDKWASLWNWFDISNWLWYIR) are MPER; binding to GalCer. A helical transmembrane segment spans residues 671 to 691 (FIMIVGGLIGLRIVFAVLSIV). Residues 692–849 (NRVRQGYSPL…IRQGLERALL (158 aa)) are Cytoplasmic-facing. Residues 698 to 701 (YSPL) carry the YXXL motif; contains endocytosis signal motif. The disordered stretch occupies residues 709 to 729 (HQREPDRLGKTEEGGGEQDRD). C750 carries the S-palmitoyl cysteine; by host lipid modification. A Di-leucine internalization motif motif is present at residues 848 to 849 (LL).

Belongs to the HIV-1 env protein family. As to quaternary structure, the mature envelope protein (Env) consists of a homotrimer of non-covalently associated gp120-gp41 heterodimers. The resulting complex protrudes from the virus surface as a spike. There seems to be as few as 10 spikes on the average virion. Interacts with host CD4, CCR5 and CXCR4. Gp120 also interacts with the C-type lectins CD209/DC-SIGN and CLEC4M/DC-SIGNR (collectively referred to as DC-SIGN(R)). Gp120 and gp41 interact with GalCer. Gp120 interacts with host ITGA4/ITGB7 complex; on CD4+ T-cells, this interaction results in rapid activation of integrin ITGAL/LFA-1, which facilitates efficient cell-to-cell spreading of HIV-1. Gp120 interacts with cell-associated heparan sulfate; this interaction increases virus infectivity on permissive cells and may be involved in infection of CD4- cells. The mature envelope protein (Env) consists of a homotrimer of non-covalently associated gp120-gp41 heterodimers. The resulting complex protrudes from the virus surface as a spike. There seems to be as few as 10 spikes on the average virion. Post-translationally, highly glycosylated by host. The high number of glycan on the protein is reffered to as 'glycan shield' because it contributes to hide protein sequence from adaptive immune system. Palmitoylation of the transmembrane protein and of Env polyprotein (prior to its proteolytic cleavage) is essential for their association with host cell membrane lipid rafts. Palmitoylation is therefore required for envelope trafficking to classical lipid rafts, but not for viral replication. In terms of processing, specific enzymatic cleavages in vivo yield mature proteins. Envelope glycoproteins are synthesized as an inactive precursor that is heavily N-glycosylated and processed likely by host cell furin in the Golgi to yield the mature SU and TM proteins. The cleavage site between SU and TM requires the minimal sequence [KR]-X-[KR]-R. About 2 of the 9 disulfide bonds of gp41 are reduced by P4HB/PDI, following binding to CD4 receptor.

It is found in the virion membrane. The protein localises to the host cell membrane. The protein resides in the host endosome membrane. Oligomerizes in the host endoplasmic reticulum into predominantly trimers. In a second time, gp160 transits in the host Golgi, where glycosylation is completed. The precursor is then proteolytically cleaved in the trans-Golgi and thereby activated by cellular furin or furin-like proteases to produce gp120 and gp41. In terms of biological role, attaches the virus to the host lymphoid cell by binding to the primary receptor CD4. This interaction induces a structural rearrangement creating a high affinity binding site for a chemokine coreceptor like CXCR4 and/or CCR5. Acts as a ligand for CD209/DC-SIGN and CLEC4M/DC-SIGNR, which are respectively found on dendritic cells (DCs), and on endothelial cells of liver sinusoids and lymph node sinuses. These interactions allow capture of viral particles at mucosal surfaces by these cells and subsequent transmission to permissive cells. HIV subverts the migration properties of dendritic cells to gain access to CD4+ T-cells in lymph nodes. Virus transmission to permissive T-cells occurs either in trans (without DCs infection, through viral capture and transmission), or in cis (following DCs productive infection, through the usual CD4-gp120 interaction), thereby inducing a robust infection. In trans infection, bound virions remain infectious over days and it is proposed that they are not degraded, but protected in non-lysosomal acidic organelles within the DCs close to the cell membrane thus contributing to the viral infectious potential during DCs' migration from the periphery to the lymphoid tissues. On arrival at lymphoid tissues, intact virions recycle back to DCs' cell surface allowing virus transmission to CD4+ T-cells. Its function is as follows. Acts as a class I viral fusion protein. Under the current model, the protein has at least 3 conformational states: pre-fusion native state, pre-hairpin intermediate state, and post-fusion hairpin state. During fusion of viral and target intracellular membranes, the coiled coil regions (heptad repeats) assume a trimer-of-hairpins structure, positioning the fusion peptide in close proximity to the C-terminal region of the ectodomain. The formation of this structure appears to drive apposition and subsequent fusion of viral and target cell membranes. Complete fusion occurs in host cell endosomes and is dynamin-dependent, however some lipid transfer might occur at the plasma membrane. The virus undergoes clathrin-dependent internalization long before endosomal fusion, thus minimizing the surface exposure of conserved viral epitopes during fusion and reducing the efficacy of inhibitors targeting these epitopes. Membranes fusion leads to delivery of the nucleocapsid into the cytoplasm. In Human immunodeficiency virus type 1 group M subtype G (isolate 92NG083) (HIV-1), this protein is Envelope glycoprotein gp160.